We begin with the raw amino-acid sequence, 720 residues long: Probable GTPase-activating protein GYL1 (720 aa).

Met1 is subject to N-acetylmethionine. Residues 1–52 show a composition bias toward basic and acidic residues; it reads MNSNEDIHEERIEVPRTPHQTQPEKDSDRIALRDEISVPEGDEKAYSDEKVE. The tract at residues 1-132 is disordered; sequence MNSNEDIHEE…TSPPLPPRAD (132 aa). The residue at position 17 (Thr17) is a Phosphothreonine. Ser37 is modified (phosphoserine). Positions 54–66 are enriched in polar residues; the sequence is ATTNASSNFGSNE. The residue at position 73 (Ser73) is a Phosphoserine. Positions 95 to 108 are enriched in polar residues; sequence SKTILPSDDLSQQL. A compositionally biased stretch (basic and acidic residues) spans 111–120; sequence EESKVEEALK. At Ser139 the chain carries Phosphoserine. Disordered regions lie at residues 144 to 164 and 179 to 210; these read SLPP…RPQL and APHG…PRRI. Positions 184–196 are enriched in polar residues; sequence ATPSKSPTSAVGN. The 181-residue stretch at 297-477 folds into the Rab-GAP TBC domain; sequence GIPAAYRLVV…RIGDMVFLEG (181 aa). A Glycyl lysine isopeptide (Lys-Gly) (interchain with G-Cter in SUMO) cross-link involves residue Lys498. The stretch at 572–696 forms a coiled coil; it reads QYKSITEKNL…EIKTANKNGT (125 aa).

Belongs to the GYP5 family. In terms of assembly, interacts with GYP5 and RVS167. Is part of SEC4-containing complexes.

It is found in the cytoplasm. Its subcellular location is the bud. The protein resides in the bud neck. Functionally, probable GTPase-activating protein which stimulates the GTP hydrolysis rate by GYP5 of YPT1 and SEC4. Involved in ER to Golgi trafficking and polarized exocytosis. In Saccharomyces cerevisiae (strain ATCC 204508 / S288c) (Baker's yeast), this protein is Probable GTPase-activating protein GYL1 (GYL1).